The chain runs to 386 residues: Succinate--CoA ligase [ADP-forming] subunit beta (386 aa).

Residues 9-244 (KAVLRSYGVS…LDEEDAKEIE (236 aa)) enclose the ATP-grasp domain. ATP contacts are provided by residues Lys-46, 53–55 (GRG), Glu-99, Cys-102, and Glu-107. Mg(2+)-binding residues include Asn-199 and Asp-213. Residues Asn-264 and 321–323 (GIM) each bind substrate.

It belongs to the succinate/malate CoA ligase beta subunit family. As to quaternary structure, heterotetramer of two alpha and two beta subunits. The cofactor is Mg(2+).

It catalyses the reaction succinate + ATP + CoA = succinyl-CoA + ADP + phosphate. It carries out the reaction GTP + succinate + CoA = succinyl-CoA + GDP + phosphate. It functions in the pathway carbohydrate metabolism; tricarboxylic acid cycle; succinate from succinyl-CoA (ligase route): step 1/1. Functionally, succinyl-CoA synthetase functions in the citric acid cycle (TCA), coupling the hydrolysis of succinyl-CoA to the synthesis of either ATP or GTP and thus represents the only step of substrate-level phosphorylation in the TCA. The beta subunit provides nucleotide specificity of the enzyme and binds the substrate succinate, while the binding sites for coenzyme A and phosphate are found in the alpha subunit. In Bacillus anthracis (strain A0248), this protein is Succinate--CoA ligase [ADP-forming] subunit beta.